Reading from the N-terminus, the 845-residue chain is Krueppel homolog 1 (845 aa).

The segment at 141-164 is disordered; the sequence is QKQQQQQQHESITNAAPTAAPSAQ. C2H2-type zinc fingers lie at residues 194–216, 271–293, 299–321, 327–349, 355–377, 383–407, 413–435, and 441–463; these read FKCD…TKSH, YQCN…YRTH, FECE…RRIH, YKCD…MRIH, HKCS…MRTH, YKCP…SRTH, YHCD…RVQH, and YKCT…IKGH. 2 disordered regions span residues 469–610 and 757–845; these read DDEA…VQGQ and GLRS…AKAS. Low complexity-rich tracts occupy residues 474-491, 498-508, and 532-559; these read AAAA…SAGS, SSNSESSNHSP, and ATLS…SSMA. Residues 582–591 are compositionally biased toward polar residues; sequence SGVSSAQPAH. Low complexity predominate over residues 759–775; it reads RSSTESPERSSSPESDS. Residues 796–809 show a composition bias toward basic and acidic residues; that stretch reads NKGDDGQVDSEKAS. The segment covering 810–823 has biased composition (low complexity); sequence GDGTSAAGGAASVG.

The protein belongs to the krueppel C2H2-type zinc-finger protein family.

Plays a general role in the hierarchies of gene expression leading to metamorphosis. The protein is Krueppel homolog 1 (Kr-h1) of Drosophila melanogaster (Fruit fly).